The following is a 584-amino-acid chain: POTE ankyrin domain family member D (584 aa).

ANK repeat units lie at residues 172–201, 205–234, 238–267, 271–300, 304–333, and 337–366; these read EKRTALHLASANGNSEVVQLLLDRRCQLNV, KKRTALIKAIQCQEDECVLMLLEHGADRNI, YGNTALHYAIYNEDKLMAKALLLYGADIES, CGLTPLLLGVHEQKQQVVKFLIKKKANLNV, YGRTALILAVCCGSASIVNLLLEQNVDVSS, and SGQTAREYAVSSHHHVICELLSDYKEKQML. Residues 369–502 form a disordered region; it reads SSENSNPEQD…ILTNKQKQIE (134 aa). Composition is skewed to basic and acidic residues over residues 377–392, 401–412, and 466–481; these read QDLKLTSEEESQRLKV, MSQEPEINKDCD, and EEYHSDEQNDTRKQLS. Positions 482–498 are enriched in polar residues; that stretch reads EEQNTGISQDEILTNKQ. Residues 494-583 adopt a coiled-coil conformation; sequence LTNKQKQIEV…LNEEALTKTN (90 aa).

This sequence belongs to the POTE family. Expressed in prostate, ovary, testis, placenta and prostate cancer cell lines. Localizes to basal and terminal prostate epithelial cells.

It is found in the cell membrane. The protein is POTE ankyrin domain family member D (POTED) of Homo sapiens (Human).